The chain runs to 328 residues: Malate dehydrogenase (328 aa).

11-17 is an NAD(+) binding site; the sequence is GAAGQIG. Substrate-binding residues include Arg-94 and Arg-100. Residues Asn-107, Gln-114, and 131-133 each bind NAD(+); that span reads VGN. Asn-133 and Arg-164 together coordinate substrate. Catalysis depends on His-189, which acts as the Proton acceptor.

The protein belongs to the LDH/MDH superfamily. MDH type 2 family.

It carries out the reaction (S)-malate + NAD(+) = oxaloacetate + NADH + H(+). Catalyzes the reversible oxidation of malate to oxaloacetate. This chain is Malate dehydrogenase, found in Xanthomonas campestris pv. campestris (strain 8004).